A 258-amino-acid polypeptide reads, in one-letter code: Shikimate dehydrogenase (NADP(+)) (258 aa).

Shikimate is bound by residues 14–16 (SES) and Thr61. Residue Lys65 is the Proton acceptor of the active site. Shikimate contacts are provided by Asn86 and Asp101. Residues 125–129 (GSGGS) and Leu211 each bind NADP(+). Tyr213 lines the shikimate pocket. Gly234 contributes to the NADP(+) binding site.

This sequence belongs to the shikimate dehydrogenase family. In terms of assembly, homodimer.

The catalysed reaction is shikimate + NADP(+) = 3-dehydroshikimate + NADPH + H(+). It functions in the pathway metabolic intermediate biosynthesis; chorismate biosynthesis; chorismate from D-erythrose 4-phosphate and phosphoenolpyruvate: step 4/7. Its function is as follows. Involved in the biosynthesis of the chorismate, which leads to the biosynthesis of aromatic amino acids. Catalyzes the reversible NADPH linked reduction of 3-dehydroshikimate (DHSA) to yield shikimate (SA). The sequence is that of Shikimate dehydrogenase (NADP(+)) from Clostridium botulinum (strain ATCC 19397 / Type A).